The primary structure comprises 57 residues: uncharacterized protein (57 aa).

Positions Gln-34–Phe-57 are disordered.

This is an uncharacterized protein from Saccharomyces cerevisiae (strain ATCC 204508 / S288c) (Baker's yeast).